Reading from the N-terminus, the 437-residue chain is Ribosomal protein uS12 methylthiotransferase RimO (437 aa).

In terms of domain architecture, MTTase N-terminal spans 4–114 (PRVSFVSLGC…VMNAVHEVAP (111 aa)). Residues Cys13, Cys49, Cys78, Cys145, Cys149, and Cys152 each coordinate [4Fe-4S] cluster. In terms of domain architecture, Radical SAM core spans 131-369 (LTPRHYAYLK…MAKQQQISTN (239 aa)). Residues 372–437 (KKKVGKRLPV…DAYDLHGTAV (66 aa)) enclose the TRAM domain.

It belongs to the methylthiotransferase family. RimO subfamily. It depends on [4Fe-4S] cluster as a cofactor.

It is found in the cytoplasm. The catalysed reaction is L-aspartate(89)-[ribosomal protein uS12]-hydrogen + (sulfur carrier)-SH + AH2 + 2 S-adenosyl-L-methionine = 3-methylsulfanyl-L-aspartate(89)-[ribosomal protein uS12]-hydrogen + (sulfur carrier)-H + 5'-deoxyadenosine + L-methionine + A + S-adenosyl-L-homocysteine + 2 H(+). Catalyzes the methylthiolation of an aspartic acid residue of ribosomal protein uS12. The polypeptide is Ribosomal protein uS12 methylthiotransferase RimO (Brucella abortus (strain S19)).